Consider the following 151-residue polypeptide: Myosin light polypeptide 6 (151 aa).

Cys2 carries the N-acetylcysteine modification. EF-hand domains lie at 7 to 42 (EQTA…LGQN), 84 to 119 (GCFE…LGEK), and 119 to 151 (KMTE…VLSG).

As to quaternary structure, myosin is a hexamer of 2 heavy chains and 4 light chains.

Regulatory light chain of myosin. Does not bind calcium. The sequence is that of Myosin light polypeptide 6 (MYL6) from Gallus gallus (Chicken).